A 313-amino-acid chain; its full sequence is Recombination-promoting nuclease pSLT051 (313 aa).

This sequence belongs to the Rpn/YhgA-like nuclease family.

A low activity DNA endonuclease probably yielding 3'-hydroxyl ends. Involved in RecA-independent recombination and horizontal gene transfer. This is Recombination-promoting nuclease pSLT051 from Salmonella typhimurium (strain LT2 / SGSC1412 / ATCC 700720).